Reading from the N-terminus, the 122-residue chain is Large ribosomal subunit protein uL14 (122 aa).

It belongs to the universal ribosomal protein uL14 family. In terms of assembly, part of the 50S ribosomal subunit. Forms a cluster with proteins L3 and L19. In the 70S ribosome, L14 and L19 interact and together make contacts with the 16S rRNA in bridges B5 and B8.

Functionally, binds to 23S rRNA. Forms part of two intersubunit bridges in the 70S ribosome. This chain is Large ribosomal subunit protein uL14, found in Chelativorans sp. (strain BNC1).